Here is a 497-residue protein sequence, read N- to C-terminus: Vacuolar fusion protein CCZ1 homolog B (497 aa).

A disordered region spans residues 244–284; the sequence is GTSSWSYLRKGSGSPQISSRSTTVPPLGSGGTLPSGNGSST.

Belongs to the CCZ1 family. In terms of assembly, interacts with MON1.

It is found in the endosome. It localises to the prevacuolar compartment. Functionally, plays an important role in membrane trafficking through the secretory apparatus. In complex with MON1, acts as a guanine exchange factor (GEF) for RABG3F of the RAB7 protein family. Promotes the exchange of GDP to GTP, converting RABG3F from an inactive GDP-bound form into an active GTP-bound form. The RABG3F active form is involved in protein trafficking from prevacuolar compartments (PVCs) to vacuoles. May serve as a linker between Rab5 and Rab7 protein families in PVCs and mediate PVC maturation. This is Vacuolar fusion protein CCZ1 homolog B from Arabidopsis thaliana (Mouse-ear cress).